Reading from the N-terminus, the 254-residue chain is Cobalt transport protein CbiM (254 aa).

The N-terminal stretch at 1-31 (MKTILRPFTLLSRSIFLALFVLFLWSPDAHA) is a signal peptide. 6 helical membrane-spanning segments follow: residues 37–57 (GFLP…FLVV), 74–94 (LLLA…IPSV), 106–126 (LGAV…VLLF), 128–148 (ALLL…SMAI), 169–189 (WLAV…VTSL), and 212–232 (IFAL…VMVF).

This sequence belongs to the CbiM family. Forms an energy-coupling factor (ECF) transporter complex composed of an ATP-binding protein (A component, CbiO), a transmembrane protein (T component, CbiQ) and 2 possible substrate-capture proteins (S components, CbiM and CbiN) of unknown stoichimetry.

The protein localises to the cell inner membrane. The protein operates within cofactor biosynthesis; adenosylcobalamin biosynthesis. In terms of biological role, part of the energy-coupling factor (ECF) transporter complex CbiMNOQ involved in cobalt import. The chain is Cobalt transport protein CbiM from Chlorobium limicola (strain DSM 245 / NBRC 103803 / 6330).